A 168-amino-acid polypeptide reads, in one-letter code: Protein C2-DOMAIN ABA-RELATED 1 (168 aa).

At methionine 1 the chain carries N-acetylmethionine. Residues 1-104 form the C2 domain; the sequence is MENLVGLLRI…EAIKFAHQLG (104 aa). Arginine 21, aspartate 22, aspartate 27, aspartate 73, tyrosine 74, aspartate 75, and aspartate 81 together coordinate Ca(2+).

The protein belongs to the plant CAR protein family. Dimers and oligomers. Binds to PYR/PYL/RCAR abscisic acid intracellular receptors in an ABA-independent manner, both at the plasma membrane and in the nucleus. Interacts directly with PYR1, PYL1, PYL4, PYL6 and PYL8. Binds phospholipids in a Ca(2+)-dependent manner. It depends on Ca(2+) as a cofactor. As to expression, expressed in roots.

The protein localises to the cell membrane. It is found in the nucleus. Its function is as follows. Stimulates the GTPase/ATPase activities of Obg-like ATPases. Mediates the transient calcium-dependent interaction of PYR/PYL/RCAR abscisic acid (ABA) receptors with the plasma membrane and thus regulates ABA sensitivity. Binds liposomes in the absence of exogenous Ca(2+), but this activity is enhanced in the presence of Ca(2+) and generates membrane curvature. The chain is Protein C2-DOMAIN ABA-RELATED 1 from Arabidopsis thaliana (Mouse-ear cress).